The chain runs to 645 residues: 1,4-alpha-glucan branching enzyme GlgB (645 aa).

Residue Asp309 is the Nucleophile of the active site. Glu352 acts as the Proton donor in catalysis. The segment at 619–645 (VKTRKGSKKQDGSKTKVRSNVTSRGKR) is disordered. A compositionally biased stretch (polar residues) spans 636-645 (RSNVTSRGKR).

This sequence belongs to the glycosyl hydrolase 13 family. GlgB subfamily. As to quaternary structure, monomer.

The enzyme catalyses Transfers a segment of a (1-&gt;4)-alpha-D-glucan chain to a primary hydroxy group in a similar glucan chain.. It participates in glycan biosynthesis; glycogen biosynthesis. In terms of biological role, catalyzes the formation of the alpha-1,6-glucosidic linkages in glycogen by scission of a 1,4-alpha-linked oligosaccharide from growing alpha-1,4-glucan chains and the subsequent attachment of the oligosaccharide to the alpha-1,6 position. In Bacillus anthracis (strain CDC 684 / NRRL 3495), this protein is 1,4-alpha-glucan branching enzyme GlgB.